Here is a 468-residue protein sequence, read N- to C-terminus: ATP synthase subunit beta (468 aa).

ATP is bound at residue 155-162 (GGAGVGKT).

This sequence belongs to the ATPase alpha/beta chains family. As to quaternary structure, F-type ATPases have 2 components, CF(1) - the catalytic core - and CF(0) - the membrane proton channel. CF(1) has five subunits: alpha(3), beta(3), gamma(1), delta(1), epsilon(1). CF(0) has three main subunits: a(1), b(2) and c(9-12). The alpha and beta chains form an alternating ring which encloses part of the gamma chain. CF(1) is attached to CF(0) by a central stalk formed by the gamma and epsilon chains, while a peripheral stalk is formed by the delta and b chains.

The protein localises to the cell membrane. The catalysed reaction is ATP + H2O + 4 H(+)(in) = ADP + phosphate + 5 H(+)(out). Its function is as follows. Produces ATP from ADP in the presence of a proton gradient across the membrane. The catalytic sites are hosted primarily by the beta subunits. This Streptococcus pyogenes serotype M6 (strain ATCC BAA-946 / MGAS10394) protein is ATP synthase subunit beta.